A 447-amino-acid polypeptide reads, in one-letter code: Glutamyl-tRNA(Gln) amidotransferase subunit A (447 aa).

Catalysis depends on charge relay system residues K50 and S125. S149 acts as the Acyl-ester intermediate in catalysis.

The protein belongs to the amidase family. GatA subfamily. Heterotrimer of A, B and C subunits.

The enzyme catalyses L-glutamyl-tRNA(Gln) + L-glutamine + ATP + H2O = L-glutaminyl-tRNA(Gln) + L-glutamate + ADP + phosphate + H(+). In terms of biological role, allows the formation of correctly charged Gln-tRNA(Gln) through the transamidation of misacylated Glu-tRNA(Gln) in organisms which lack glutaminyl-tRNA synthetase. The reaction takes place in the presence of glutamine and ATP through an activated gamma-phospho-Glu-tRNA(Gln). In Sulfurimonas denitrificans (strain ATCC 33889 / DSM 1251) (Thiomicrospira denitrificans (strain ATCC 33889 / DSM 1251)), this protein is Glutamyl-tRNA(Gln) amidotransferase subunit A.